A 761-amino-acid chain; its full sequence is MNWRLVEFLYLLFIWDHILVQPSHQDPAATNQHVSKEFDWLISDRGPFHHSRSYLSFVERHRQGFTTRYKIYREFARWKVRNTAIERRDLLHNPLPLMPEFQRSIRLLGRRPTTQQFIDTIIKKYGTHILISATLGGEEALTMYMDKSRLDRKSGNATQSVEALHQLASSYFVDRDGTMRRLHEIQISTGAIKVTETRTGPLGCNSYDNLDSVSSVLLQSTESKLHLQGLQIIFPQYLQEKFVQSALSYIMCNGEGEYICRNSQCGCQCAEEFPQCNCPITDIQIMEYTLANMAKTWTEAYKDLENSDEFKSFMKRLPSNHFLTIASIHQHWGNDWDLQNRYKLLQSSLEAQRQKIQRTARKLFGLSVRCRHNPNHQLPRERTIQEWLTRVQSLLYCNENGFWGTFLESQRSCVCHGGTSLCQRPIPCIIGGNNSCAMCSLANISLCGSCNKGYKLYRGRCEPQNVDSERSEQFISFETDLDFQDLELKYLLQKMDSRLYVHTTFISNEIRLDTFFDPRWRKRMSLTLKSNKNRMDFIHMVIGISMRICQMRNSSLDPMFFVYVNPFSGSHSEGWNMPFGEYGYPRWEKIRLQNSQCYNWTLLLGNRWKTFFETVHIYLRSRTRLPSLLRNETGQGPVDLSDPSKRQFYIKISDVQVYGYSLRFNADLLRSAVQQVNQSYTQGGQFYSSSSVMLLLLDIRDRINRLAPPVAPGKPQLDLFSCMLKHRLKLTNSEIIRVNHALDLYNTEILKQSDQMTAKLC.

A signal peptide spans 1-22; it reads MNWRLVEFLYLLFIWDHILVQP. One can recognise an MACPF domain in the interval 68–251; sequence RYKIYREFAR…FVQSALSYIM (184 aa). N-linked (GlcNAc...) asparagine glycosylation is found at asparagine 156, asparagine 433, asparagine 443, asparagine 553, asparagine 599, asparagine 631, and asparagine 677.

It belongs to the BRINP family.

The protein localises to the cytoplasm. Functionally, plays a role in neurogenesis and brain development. May suppress cell cycle progression in postmitotic neurons by inhibiting G1/S transition. This chain is BMP/retinoic acid-inducible neural-specific protein 1 (BRINP1), found in Gallus gallus (Chicken).